The primary structure comprises 567 residues: UPF0313 protein Tpet_0582 (567 aa).

One can recognise a Radical SAM core domain in the interval 288–560 (KAIETVKFSI…NKMKENVLFK (273 aa)). [4Fe-4S] cluster contacts are provided by cysteine 303, cysteine 307, and cysteine 310.

Belongs to the UPF0313 family. It depends on [4Fe-4S] cluster as a cofactor.

The polypeptide is UPF0313 protein Tpet_0582 (Thermotoga petrophila (strain ATCC BAA-488 / DSM 13995 / JCM 10881 / RKU-1)).